Here is a 293-residue protein sequence, read N- to C-terminus: Aquaporin-6 (293 aa).

At 1–22 (MEPGLCSRAYLLVGGLWTAISK) the chain is on the cytoplasmic side. A helical membrane pass occupies residues 23–43 (ALFAEFLATGLYVFFGVGSVL). Residues 44-51 (PWPVALPS) are Extracellular-facing. A helical transmembrane segment spans residues 52–70 (VLQIAITFNLATATAVQIS). Residues 71 to 75 (WKTSG) lie on the Cytoplasmic side of the membrane. An intramembrane region (discontinuously helical) is located at residues 76 to 85 (AHANPAVTLA). Positions 79–81 (NPA) match the NPA 1 motif. Over 86–96 (YLVGSHISLPR) the chain is Cytoplasmic. Residues 97–118 (AMAYIAAQLAGATAGAALLYGV) traverse the membrane as a helical segment. Over 119 to 138 (TPGGIRETLGVNVVHNSTST) the chain is Extracellular. Residue Asn-134 is glycosylated (N-linked (GlcNAc...) asparagine). A helical membrane pass occupies residues 139 to 159 (GQAVAVELVLTLQLVLCVFAS). The Cytoplasmic segment spans residues 160 to 165 (MDGRQT). A helical membrane pass occupies residues 166 to 185 (LASPAAMIGTSVALGHLIGI). The Extracellular segment spans residues 186–189 (YFTG). Residues 190 to 202 (CSMNPARSFGPAV) constitute an intramembrane region (discontinuously helical). Positions 193–195 (NPA) match the NPA 2 motif. The Extracellular portion of the chain corresponds to 203-210 (IVGKFAVH). Residues 211–231 (WIFWVGPLTGAVLASLIYNFI) traverse the membrane as a helical segment. Over 232–293 (LFPDTKTVAQ…RSFSFTLGLC (62 aa)) the chain is Cytoplasmic.

This sequence belongs to the MIP/aquaporin (TC 1.A.8) family. In terms of assembly, homotetramer; each monomer provides an independent solute pore.

The protein resides in the cytoplasmic vesicle membrane. It carries out the reaction nitrate(in) = nitrate(out). The catalysed reaction is iodide(out) = iodide(in). It catalyses the reaction bromide(in) = bromide(out). The enzyme catalyses chloride(in) = chloride(out). It carries out the reaction Na(+)(in) = Na(+)(out). The catalysed reaction is H2O(in) = H2O(out). It catalyses the reaction CO2(out) = CO2(in). The enzyme catalyses NH4(+)(in) = NH4(+)(out). Its function is as follows. Aquaporins form homotetrameric transmembrane channels, with each monomer independently mediating water transport across the plasma membrane along its osmotic gradient. Unlike classical aquaporins, AQP6 is an intracellular channel with selective anion permeability, particularly for nitrate, and exhibits very low water permeability. It may also facilitate the transport of gases, such as CO2 and NH4(+), as demonstrated in vitro. The polypeptide is Aquaporin-6 (Mus musculus (Mouse)).